Consider the following 429-residue polypeptide: Multifunctional CCA protein (429 aa).

ATP-binding residues include Gly27 and Arg30. CTP contacts are provided by Gly27 and Arg30. Positions 40 and 42 each coordinate Mg(2+). Positions 110, 162, and 165 each coordinate ATP. Residues Arg110, Arg162, and Arg165 each contribute to the CTP site. Residues 251 to 352 form the HD domain; the sequence is TGVHTMMVVD…VRLLERCDAL (102 aa).

This sequence belongs to the tRNA nucleotidyltransferase/poly(A) polymerase family. Bacterial CCA-adding enzyme type 1 subfamily. As to quaternary structure, monomer. Can also form homodimers and oligomers. The cofactor is Mg(2+). Requires Ni(2+) as cofactor.

It catalyses the reaction a tRNA precursor + 2 CTP + ATP = a tRNA with a 3' CCA end + 3 diphosphate. The enzyme catalyses a tRNA with a 3' CCA end + 2 CTP + ATP = a tRNA with a 3' CCACCA end + 3 diphosphate. In terms of biological role, catalyzes the addition and repair of the essential 3'-terminal CCA sequence in tRNAs without using a nucleic acid template. Adds these three nucleotides in the order of C, C, and A to the tRNA nucleotide-73, using CTP and ATP as substrates and producing inorganic pyrophosphate. tRNA 3'-terminal CCA addition is required both for tRNA processing and repair. Also involved in tRNA surveillance by mediating tandem CCA addition to generate a CCACCA at the 3' terminus of unstable tRNAs. While stable tRNAs receive only 3'-terminal CCA, unstable tRNAs are marked with CCACCA and rapidly degraded. In Ralstonia nicotianae (strain ATCC BAA-1114 / GMI1000) (Ralstonia solanacearum), this protein is Multifunctional CCA protein.